Here is a 228-residue protein sequence, read N- to C-terminus: Phosphatidate cytidylyltransferase (228 aa).

The next 6 helical transmembrane spans lie at 31–51 (FVVAILWFKTLFYILMILVGL), 65–85 (IHYLLIGFIIIPIPISLLIFL), 93–113 (LVIMLYFCIIWSVDTFAMIGG), 131–151 (WTGLIIGTISAGLIAVLVSLI), 165–185 (IYLFIISCILALIAQSSDLFI), and 206–226 (GVLDRFDSIILTAPVFFGINI).

It belongs to the CDS family.

The protein resides in the cell membrane. The enzyme catalyses a 1,2-diacyl-sn-glycero-3-phosphate + CTP + H(+) = a CDP-1,2-diacyl-sn-glycerol + diphosphate. It participates in phospholipid metabolism; CDP-diacylglycerol biosynthesis; CDP-diacylglycerol from sn-glycerol 3-phosphate: step 3/3. This Rickettsia typhi (strain ATCC VR-144 / Wilmington) protein is Phosphatidate cytidylyltransferase (cdsA).